The sequence spans 407 residues: V-set and immunoglobulin domain-containing protein 1 (407 aa).

An N-terminal signal peptide occupies residues 1–22; the sequence is MMVFAFWKVFLILNCLAGQVSM. One can recognise an Ig-like V-type domain in the interval 23–134; that stretch reads VQVTIPDTFV…HFVGKNQGLL (112 aa). Topologically, residues 23–234 are extracellular; it reads VQVTIPDTFV…EIDLTSSHPE (212 aa). The N-linked (GlcNAc...) asparagine glycan is linked to N39. Cystine bridges form between C44–C118 and C163–C213. Residues 145–229 form the Ig-like C2-type domain; the sequence is PFCTIQGRPE…GNSSCEIDLT (85 aa). N202 and N221 each carry an N-linked (GlcNAc...) asparagine glycan. The chain crosses the membrane as a helical span at residues 235–255; it reads VGIIIGALVGALIGAAVIICV. At 256 to 407 the chain is on the cytoplasmic side; sequence VYFARNKVKS…SKAGEDTVKA (152 aa). Disordered regions lie at residues 268–289 and 318–407; these read QKNLNSSTELEPMTKVHHPQQS and TAVL…TVKA. Phosphoserine occurs at positions 273 and 274. Positions 361 to 371 are enriched in acidic residues; that stretch reads DPETETEPEPE.

It localises to the membrane. The polypeptide is V-set and immunoglobulin domain-containing protein 1 (Vsig1) (Mus musculus (Mouse)).